We begin with the raw amino-acid sequence, 243 residues long: Sarcospan (243 aa).

Residues 1-43 form a disordered region; it reads MGKNKQPRGQQRQGGPPAADAAGPDDMEPKKGTGAPKECGEEE. The Cytoplasmic portion of the chain corresponds to 1 to 53; it reads MGKNKQPRGQQRQGGPPAADAAGPDDMEPKKGTGAPKECGEEEPRTCCGCRFP. Low complexity predominate over residues 7 to 24; it reads PRGQQRQGGPPAADAAGP. Residues 54–74 traverse the membrane as a helical segment; the sequence is LLLALLQLALGIAVTVVGFLM. Over 75-86 the chain is Extracellular; the sequence is ASISSSLLVRDT. A helical membrane pass occupies residues 87–107; that stretch reads PFWAGIIVCLVAYLGLFMLCV. Residues 108-122 are Cytoplasmic-facing; sequence SYQVDERTCIQFSMK. Residues 123-143 form a helical membrane-spanning segment; that stretch reads LLYFLLSALGLTVCVLAVAFA. The Extracellular segment spans residues 144–193; that stretch reads AHHYSQLTQFTCETTLDSCQCKLPSSEPLSRTFVYRDVTDCTSVTGTFKL. A helical membrane pass occupies residues 194 to 214; sequence FLLIQMILNLVCGLVCLLACF. Over 215–243 the chain is Cytoplasmic; it reads VMWKHRYQVFYVGVRICSLTASEGPQQKI.

Isoform 1 is expressed exclusively in heart and skeletal muscle. Isoform 2 is expressed in heart, skeletal muscle, thymus, prostate, testis, ovary, small intestine, colon and spleen.

The protein localises to the cell membrane. Its subcellular location is the sarcolemma. The protein resides in the postsynaptic cell membrane. Component of the dystrophin-glycoprotein complex (DGC), a complex that spans the muscle plasma membrane and forms a link between the F-actin cytoskeleton and the extracellular matrix. Preferentially associates with the sarcoglycan subcomplex of the DGC. The protein is Sarcospan (SSPN) of Homo sapiens (Human).